The sequence spans 365 residues: Cobalt-precorrin-5B C(1)-methyltransferase (365 aa).

Belongs to the CbiD family.

It carries out the reaction Co-precorrin-5B + S-adenosyl-L-methionine = Co-precorrin-6A + S-adenosyl-L-homocysteine. Its pathway is cofactor biosynthesis; adenosylcobalamin biosynthesis; cob(II)yrinate a,c-diamide from sirohydrochlorin (anaerobic route): step 6/10. In terms of biological role, catalyzes the methylation of C-1 in cobalt-precorrin-5B to form cobalt-precorrin-6A. This chain is Cobalt-precorrin-5B C(1)-methyltransferase, found in Moorella thermoacetica (strain ATCC 39073 / JCM 9320).